Consider the following 445-residue polypeptide: Glycine--tRNA ligase (445 aa).

Residues arginine 97 and glutamate 145 each coordinate substrate. Residues 177–179 (RNE), 187–192 (FRTCEF), 262–263 (EI), and 308–311 (GLTR) each bind ATP. 192 to 196 (FEQME) serves as a coordination point for substrate. 304 to 308 (ETSAG) contributes to the substrate binding site.

It belongs to the class-II aminoacyl-tRNA synthetase family. As to quaternary structure, homodimer.

It is found in the cytoplasm. It carries out the reaction tRNA(Gly) + glycine + ATP = glycyl-tRNA(Gly) + AMP + diphosphate. Its function is as follows. Catalyzes the attachment of glycine to tRNA(Gly). This is Glycine--tRNA ligase from Borreliella afzelii (strain PKo) (Borrelia afzelii).